Reading from the N-terminus, the 452-residue chain is Eukaryotic translation initiation factor 3 subunit E (452 aa).

Positions 257 to 426 (TDLFFSPAYI…GTVIMNHPPQ (170 aa)) constitute a PCI domain.

It belongs to the eIF-3 subunit E family. As to quaternary structure, component of the eukaryotic translation initiation factor 3 (eIF-3) complex.

It localises to the cytoplasm. Functionally, component of the eukaryotic translation initiation factor 3 (eIF-3) complex, which is involved in protein synthesis of a specialized repertoire of mRNAs and, together with other initiation factors, stimulates binding of mRNA and methionyl-tRNAi to the 40S ribosome. The eIF-3 complex specifically targets and initiates translation of a subset of mRNAs involved in cell proliferation. The polypeptide is Eukaryotic translation initiation factor 3 subunit E (int6) (Aspergillus niger (strain ATCC MYA-4892 / CBS 513.88 / FGSC A1513)).